The primary structure comprises 331 residues: Laforin (331 aa).

In terms of domain architecture, CBM20 spans 1 to 124 (MRFRFGVVVP…NNLVDGVYCL (124 aa)). Ser-25 carries the post-translational modification Phosphoserine; by AMPK. Residues Trp-32, Lys-87, 103 to 107 (GPHHD), Asp-197, Asp-235, and Arg-241 each bind substrate. In terms of domain architecture, Tyrosine-protein phosphatase spans 156-323 (HYSRILPNIW…EEDFFQKFGK (168 aa)). Cys-266 serves as the catalytic Phosphocysteine intermediate. A Glucan phosphatase signature motif CXAGXGR motif is present at residues 266 to 272 (CNAGVGR). Substrate-binding positions include 267–272 (NAGVGR) and Tyr-304.

The protein belongs to the protein-tyrosine phosphatase family. As to quaternary structure, homodimer. Interacts with itself. Interacts with PPP1R3B, PPP1R3C, PPP1R3D, HIRIP5, and EPM2AIP1. Binds glycogen and Lafora bodies. Interacts with NHLRC1/malin (via the NHL repeats). Forms a complex with NHLRC1/malin and HSP70. Interacts with PPP1R3D; in the presence of NHLC1/malin the interaction leads to ubiquitination and autophagic degradation of PPP1R3D. Interacts (via the phosphatase domain) with MAPT/Tau; the interaction dephosphorylates MAPT. Interacts with PRDM8. Post-translationally, polyubiquitinated by NHLRC1/malin. In terms of processing, phosphorylation on Ser-25 by AMPK affects the phosphatase activity of the enzyme and its ability to homodimerize and interact with NHLRC1, PPP1R3C or PRKAA2.

It localises to the cytoplasm. The protein localises to the endoplasmic reticulum membrane. It is found in the cell membrane. The enzyme catalyses O-phospho-L-tyrosyl-[protein] + H2O = L-tyrosyl-[protein] + phosphate. It catalyses the reaction O-phospho-L-seryl-[protein] + H2O = L-seryl-[protein] + phosphate. It carries out the reaction O-phospho-L-threonyl-[protein] + H2O = L-threonyl-[protein] + phosphate. In terms of biological role, plays an important role in preventing glycogen hyperphosphorylation and the formation of insoluble aggregates, via its activity as glycogen phosphatase, and by promoting the ubiquitination of proteins involved in glycogen metabolism via its interaction with the E3 ubiquitin ligase NHLRC1/malin. Dephosphorylates phosphotyrosine and synthetic substrates, such as para-nitrophenylphosphate (pNPP), and has low activity with phosphoserine and phosphothreonine substrates (in vitro). Has also been shown to dephosphorylate MAPT. Shows strong phosphatase activity towards complex carbohydrates in vitro, avoiding glycogen hyperphosphorylation which is associated with reduced branching and formation of insoluble aggregates. Forms a complex with NHLRC1/malin and HSP70, which suppresses the cellular toxicity of misfolded proteins by promoting their degradation through the ubiquitin-proteasome system (UPS). Acts as a scaffold protein to facilitate PPP1R3C/PTG ubiquitination by NHLRC1/malin. Also promotes proteasome-independent protein degradation through the macroautophagy pathway. The sequence is that of Laforin (EPM2A) from Canis lupus familiaris (Dog).